The sequence spans 467 residues: 3-isopropylmalate dehydratase large subunit (467 aa).

[4Fe-4S] cluster is bound by residues Cys347, Cys408, and Cys411.

It belongs to the aconitase/IPM isomerase family. LeuC type 1 subfamily. Heterodimer of LeuC and LeuD. The cofactor is [4Fe-4S] cluster.

The catalysed reaction is (2R,3S)-3-isopropylmalate = (2S)-2-isopropylmalate. It participates in amino-acid biosynthesis; L-leucine biosynthesis; L-leucine from 3-methyl-2-oxobutanoate: step 2/4. Functionally, catalyzes the isomerization between 2-isopropylmalate and 3-isopropylmalate, via the formation of 2-isopropylmaleate. The protein is 3-isopropylmalate dehydratase large subunit of Bordetella pertussis (strain Tohama I / ATCC BAA-589 / NCTC 13251).